A 412-amino-acid chain; its full sequence is Adenosine receptor A2a (412 aa).

Residues 1-7 lie on the Extracellular side of the membrane; that stretch reads MSTMGSW. A helical membrane pass occupies residues 8-32; the sequence is VYITVELAIAVLAILGNVLVCWAVW. Over 33–42 the chain is Cytoplasmic; that stretch reads LNSNLQNVTN. A helical transmembrane segment spans residues 43 to 66; sequence YFVVSLAAADIAVGVLAIPFAITI. Residues 67–77 lie on the Extracellular side of the membrane; it reads STGFCAACHNC. Disulfide bonds link C71/C159, C74/C146, and C77/C166. Residues 78–100 traverse the membrane as a helical segment; it reads LFFACFVLVLTQSSIFSLLAIAI. Topologically, residues 101 to 120 are cytoplasmic; the sequence is DRYIAIRIPLRYNGLVTGTR. Residues 121–143 form a helical membrane-spanning segment; it reads AKGIIAVCWVLSFAIGLTPMLGW. The Extracellular segment spans residues 144-173; the sequence is NNCSQPKEGRNYSQGCGEGQVACLFEDVVP. N-linked (GlcNAc...) asparagine glycosylation is found at N145 and N154. E169 serves as a coordination point for adenosine. Residues 174–198 form a helical membrane-spanning segment; the sequence is MNYMVYYNFFAFVLVPLLLMLGVYL. The Cytoplasmic segment spans residues 199 to 234; the sequence is RIFLAARRQLKQMESQPLPGERARSTLQKEVHAAKS. A helical transmembrane segment spans residues 235 to 258; sequence LAIIVGLFALCWLPLHIINCFTFF. N253 provides a ligand contact to adenosine. C259 and C262 are joined by a disulfide. Topologically, residues 259 to 266 are extracellular; that stretch reads CPECSHAP. Residues 267–290 traverse the membrane as a helical segment; sequence LWLMYLTIVLSHTNSVVNPFIYAY. The adenosine site is built by S277 and H278. Residues 291–412 lie on the Cytoplasmic side of the membrane; the sequence is RIREFRQTFR…PLAQDGAGVS (122 aa). Positions 392–412 are disordered; sequence GACPESPGLEGPLAQDGAGVS.

It belongs to the G-protein coupled receptor 1 family. In terms of assembly, interacts (via cytoplasmic C-terminal domain) with USP4; the interaction is direct. May interact with DRD4. Interacts with NECAB2. Interacts (via cytoplasmic C-terminal domain) with GAS2L2; interaction enhances receptor-mediated adenylyl cyclase activity. Ubiquitinated. Deubiquitinated by USP4; leading to stabilization and expression at the cell surface.

The protein resides in the cell membrane. Receptor for adenosine. The activity of this receptor is mediated by G proteins which activate adenylyl cyclase. The sequence is that of Adenosine receptor A2a (ADORA2A) from Canis lupus familiaris (Dog).